The following is a 236-amino-acid chain: MLSSLLRRLSRALLWFAAGSIAVVLVLRWVPPPGTALMVERKVESWFNGEPIDLQRDWTPWEDISDELKVAVIAGEDQKFASHWGFDIPAIQAALAYNERGGKVRGASTLTQQVAKNMFLWSGRSWLRKGLEAWFTALIELFWSKERILEVYLNSAEWGKGVFGAQAAARYHFGVDASRLSRQQAAQLAAVLPSPIKWSASRPSAYVASRAGWIRRQMSQLGGPSYLMQLDASRKL.

A helical membrane pass occupies residues 12–31 (ALLWFAAGSIAVVLVLRWVP).

This sequence belongs to the glycosyltransferase 51 family.

It is found in the cell inner membrane. It carries out the reaction [GlcNAc-(1-&gt;4)-Mur2Ac(oyl-L-Ala-gamma-D-Glu-L-Lys-D-Ala-D-Ala)](n)-di-trans,octa-cis-undecaprenyl diphosphate + beta-D-GlcNAc-(1-&gt;4)-Mur2Ac(oyl-L-Ala-gamma-D-Glu-L-Lys-D-Ala-D-Ala)-di-trans,octa-cis-undecaprenyl diphosphate = [GlcNAc-(1-&gt;4)-Mur2Ac(oyl-L-Ala-gamma-D-Glu-L-Lys-D-Ala-D-Ala)](n+1)-di-trans,octa-cis-undecaprenyl diphosphate + di-trans,octa-cis-undecaprenyl diphosphate + H(+). Its pathway is cell wall biogenesis; peptidoglycan biosynthesis. In terms of biological role, peptidoglycan polymerase that catalyzes glycan chain elongation from lipid-linked precursors. The sequence is that of Biosynthetic peptidoglycan transglycosylase from Pseudomonas entomophila (strain L48).